A 344-amino-acid chain; its full sequence is N-acetyl-gamma-glutamyl-phosphate reductase (344 aa).

C149 is a catalytic residue.

The protein belongs to the NAGSA dehydrogenase family. Type 1 subfamily.

It localises to the cytoplasm. The catalysed reaction is N-acetyl-L-glutamate 5-semialdehyde + phosphate + NADP(+) = N-acetyl-L-glutamyl 5-phosphate + NADPH + H(+). It functions in the pathway amino-acid biosynthesis; L-arginine biosynthesis; N(2)-acetyl-L-ornithine from L-glutamate: step 3/4. Its function is as follows. Catalyzes the NADPH-dependent reduction of N-acetyl-5-glutamyl phosphate to yield N-acetyl-L-glutamate 5-semialdehyde. This Shouchella clausii (strain KSM-K16) (Alkalihalobacillus clausii) protein is N-acetyl-gamma-glutamyl-phosphate reductase.